The primary structure comprises 49 residues: Osteocalcin (49 aa).

A Gla domain is found at tyrosine 1–glycine 47. Residue proline 9 is modified to Hydroxyproline. Ca(2+)-binding residues include glutamate 17, glutamate 21, glutamate 24, and aspartate 30. 4-carboxyglutamate is present on residues glutamate 17, glutamate 21, and glutamate 24. The cysteines at positions 23 and 29 are disulfide-linked.

This sequence belongs to the osteocalcin/matrix Gla protein family. Gamma-carboxyglutamate residues are formed by vitamin K dependent carboxylation by GGCX. These residues are essential for the binding of calcium. Decarboxylation promotes the hormone activity.

The protein localises to the secreted. Functionally, the carboxylated form is one of the main organic components of the bone matrix, which constitutes 1-2% of the total bone protein. It acts as a negative regulator of bone formation and is required to limit bone formation without impairing bone resorption or mineralization. The carboxylated form binds strongly to apatite and calcium. The uncarboxylated form acts as a hormone secreted by osteoblasts, which regulates different cellular processes, such as energy metabolism, male fertility and brain development. Regulates of energy metabolism by acting as a hormone favoring pancreatic beta-cell proliferation, insulin secretion and sensitivity and energy expenditure. Uncarboxylated osteocalcin hormone also promotes testosterone production in the testes: acts as a ligand for G protein-coupled receptor GPRC6A at the surface of Leydig cells, initiating a signaling response that promotes the expression of enzymes required for testosterone synthesis in a CREB-dependent manner. Also acts as a regulator of brain development: osteocalcin hormone crosses the blood-brain barrier and acts as a ligand for GPR158 on neurons, initiating a signaling response that prevents neuronal apoptosis in the hippocampus, favors the synthesis of all monoamine neurotransmitters and inhibits that of gamma-aminobutyric acid (GABA). Osteocalcin also crosses the placenta during pregnancy and maternal osteocalcin is required for fetal brain development. The sequence is that of Osteocalcin (BGLAP) from Equus caballus (Horse).